A 251-amino-acid polypeptide reads, in one-letter code: Probable transcriptional regulatory protein Swol_1435 (251 aa).

The disordered stretch occupies residues 1 to 23; the sequence is MAGHSKWANIKHKKARSDEKRGK.

The protein belongs to the TACO1 family.

The protein resides in the cytoplasm. The polypeptide is Probable transcriptional regulatory protein Swol_1435 (Syntrophomonas wolfei subsp. wolfei (strain DSM 2245B / Goettingen)).